The primary structure comprises 712 residues: 3',5'-cyclic-AMP phosphodiesterase 4C (712 aa).

Disordered stretches follow at residues 1-31 (MENL…APKH) and 45-64 (RFYS…LSPR). A compositionally biased stretch (basic residues) spans 17 to 31 (SRSRGRHSMTRAPKH). Basic and acidic residues predominate over residues 48 to 64 (SDPDKSAGCRERDLSPR). Ser73 is subject to Phosphoserine. A disordered region spans residues 181–200 (AKQGPVGNPSSSNQLPPAED). Residues 312–641 (VQTDQEEQLA…EWYQSKIPRS (330 aa)) enclose the PDEase domain. The active-site Proton donor is the His388. His388 provides a ligand contact to 3',5'-cyclic AMP. AMP-binding residues include His388 and His392. Positions 392, 428, 429, and 546 each coordinate Zn(2+). 4 residues coordinate AMP: Asp429, Asp546, Gln597, and Phe600. Mg(2+) is bound at residue Asp429. Asp429 provides a ligand contact to Mn(2+). Residues Gln597 and Phe600 each coordinate 3',5'-cyclic AMP. 2 disordered regions span residues 636–655 (SKIP…GPDR) and 664–712 (EAEE…NQRT). Residue Ser641 is modified to Phosphoserine. Residues 664 to 678 (EAEEEDEEEEEEGEE) show a composition bias toward acidic residues.

The protein belongs to the cyclic nucleotide phosphodiesterase family. PDE4 subfamily. Part of a complex containing AKAP5, ADCY5, ADCY6 and PKD2. Zn(2+) serves as cofactor. The cofactor is Mg(2+). It depends on Mn(2+) as a cofactor. In terms of tissue distribution, expressed in various tissues but not in cells of the immune system.

The protein resides in the cell projection. It localises to the cilium. It catalyses the reaction 3',5'-cyclic AMP + H2O = AMP + H(+). It functions in the pathway purine metabolism; 3',5'-cyclic AMP degradation; AMP from 3',5'-cyclic AMP: step 1/1. Its activity is regulated as follows. Inhibited by rolipram. In terms of biological role, hydrolyzes the second messenger cAMP, which is a key regulator of many important physiological processes. The polypeptide is 3',5'-cyclic-AMP phosphodiesterase 4C (Homo sapiens (Human)).